The sequence spans 235 residues: UPF0758 protein A1S_2918 (235 aa).

The interval 1 to 20 (MNTSIKNWPEQERPRERLLQ) is disordered. Residues 9–18 (PEQERPRERL) are compositionally biased toward basic and acidic residues. An MPN domain is found at 105 to 227 (SLHSSHLVLD…SFSFAEQQLL (123 aa)). Residues His-176, His-178, and Asp-189 each coordinate Zn(2+). Residues 176 to 189 (HNHPFGSPQPSPED) carry the JAMM motif motif.

The protein belongs to the UPF0758 family.

This chain is UPF0758 protein A1S_2918, found in Acinetobacter baumannii (strain ATCC 17978 / DSM 105126 / CIP 53.77 / LMG 1025 / NCDC KC755 / 5377).